Consider the following 215-residue polypeptide: Protein N-lysine methyltransferase METTL21A (215 aa).

S-adenosyl-L-methionine-binding positions include tryptophan 47, 73 to 75, aspartate 94, tryptophan 125, and alanine 141; that span reads GAG.

Belongs to the methyltransferase superfamily. METTL21 family.

It is found in the cytoplasm. The enzyme catalyses L-lysyl-[protein] + 3 S-adenosyl-L-methionine = N(6),N(6),N(6)-trimethyl-L-lysyl-[protein] + 3 S-adenosyl-L-homocysteine + 3 H(+). Protein-lysine methyltransferase that selectively trimethylates residues in heat shock protein 70 (HSP70) family members. In Xenopus tropicalis (Western clawed frog), this protein is Protein N-lysine methyltransferase METTL21A (mettl21a).